We begin with the raw amino-acid sequence, 233 residues long: MADS-box transcription factor 20 (233 aa).

The region spanning 1-61 (MGRGKVQVRR…GNLFHYASSH (61 aa)) is the MADS-box domain. Residues 91-184 (EGSMSYDHIK…PTKAAAPPAC (94 aa)) enclose the K-box domain.

Expressed in developing seeds and seedling shoots.

Its subcellular location is the nucleus. Its function is as follows. Probable transcription factor. This chain is MADS-box transcription factor 20 (MADS20), found in Oryza sativa subsp. japonica (Rice).